A 98-amino-acid polypeptide reads, in one-letter code: Large ribosomal subunit protein bL27 (98 aa).

A propeptide spanning residues 1 to 9 is cleaved from the precursor; sequence MLKMNLQLF.

The protein belongs to the bacterial ribosomal protein bL27 family. In terms of processing, the N-terminus is cleaved by ribosomal processing cysteine protease Prp.

This chain is Large ribosomal subunit protein bL27, found in Desulfitobacterium hafniense (strain DSM 10664 / DCB-2).